A 138-amino-acid polypeptide reads, in one-letter code: Holo-[acyl-carrier-protein] synthase (138 aa).

Residues aspartate 8 and glutamate 60 each coordinate Mg(2+).

Belongs to the P-Pant transferase superfamily. AcpS family. Requires Mg(2+) as cofactor.

It is found in the cytoplasm. The catalysed reaction is apo-[ACP] + CoA = holo-[ACP] + adenosine 3',5'-bisphosphate + H(+). Its function is as follows. Transfers the 4'-phosphopantetheine moiety from coenzyme A to a Ser of acyl-carrier-protein. This chain is Holo-[acyl-carrier-protein] synthase, found in Magnetococcus marinus (strain ATCC BAA-1437 / JCM 17883 / MC-1).